Here is an 840-residue protein sequence, read N- to C-terminus: Cullin-4 (840 aa).

Polar residues predominate over residues methionine 1–threonine 11. The segment at methionine 1–threonine 82 is disordered. Basic and acidic residues predominate over residues threonine 33–glycine 48. A compositionally biased stretch (polar residues) spans phenylalanine 69 to threonine 82. The 60-residue stretch at aspartate 772–glutamate 831 folds into the Cullin neddylation domain. Lysine 786 is covalently cross-linked (Glycyl lysine isopeptide (Lys-Gly) (interchain with G-Cter in NEDD8)).

It belongs to the cullin family. As to quaternary structure, part of an E3 ubiquitin-protein ligase complex including cul-4 and ddb-1. In terms of processing, neddylated. Deneddylated via its interaction with the COP9 signalosome (CSN) complex.

It participates in protein modification; protein ubiquitination. In terms of biological role, component of cullin-based E3 ubiquitin-protein ligase complexes which mediate the ubiquitination and subsequent proteasomal degradation of target proteins. The functional specificity of the E3 ubiquitin-protein ligase complex depends on the variable substrate recognition component. In association with ddb-1 directs ubiquitination of cdt-1 during S phase and is required for restraining DNA rereplication. Probably is involved in ubiquitination of cki-1. In Caenorhabditis elegans, this protein is Cullin-4 (cul-4).